The chain runs to 307 residues: Acyl transferase (307 aa).

Catalysis depends on charge relay system residues serine 116, aspartate 213, and histidine 243.

It belongs to the LuxD family.

Its pathway is lipid metabolism; fatty acid reduction for biolumincescence. Functionally, acyl transferase is part of the fatty acid reductase system required for aldehyde biosynthesis; it produces fatty acids for the luminescent reaction. The sequence is that of Acyl transferase from Photorhabdus laumondii subsp. laumondii (strain DSM 15139 / CIP 105565 / TT01) (Photorhabdus luminescens subsp. laumondii).